Consider the following 330-residue polypeptide: Putative F-box protein At1g57690 (330 aa).

One can recognise an F-box domain in the interval Val-25–Tyr-72.

This is Putative F-box protein At1g57690 from Arabidopsis thaliana (Mouse-ear cress).